A 239-amino-acid chain; its full sequence is MTIVKKVARLRDWIALKTGAIRSPMIAEVSGYAARFTVQSVEEIWRIRDLRGEQDVIRLLLEEAEEDDVLWDVGSNIGTHACICSTKANVFAFEPNPDTFDRLTENSDRAPGTVIPLRYGLSSSSGDISFEPSPIAANGTHKVSTEGSMTIKTISGDELVESGEVPKPNVVKVDVEGHELEVLKGMTNALQSVNFVIVEIHAGVDPKDVTKLLSEAKLSTEITKLNRDEDFVIGRRQND.

It belongs to the FkbM methyltransferase family.

It localises to the cytoplasm. It participates in cell surface structure biogenesis; S-layer biogenesis. Functionally, involved in the assembly of a N-linked pentasaccharide that decorates the S-layer glycoprotein and flagellins. S-adenosyl-L-methionine-dependent methyltransferase that modifies the hexuronic acid found at position 4 of the pentasaccharide. The polypeptide is Hexuronic acid methyltransferase AglP (aglP) (Haloferax volcanii (strain ATCC 29605 / DSM 3757 / JCM 8879 / NBRC 14742 / NCIMB 2012 / VKM B-1768 / DS2) (Halobacterium volcanii)).